We begin with the raw amino-acid sequence, 323 residues long: Arginase, hepatic (323 aa).

Histidine 102, aspartate 125, histidine 127, and aspartate 129 together coordinate Mn(2+). Substrate is bound by residues 127-131 (HADIN), 138-140 (SGN), and aspartate 184. Positions 233 and 235 each coordinate Mn(2+). Positions 247 and 278 each coordinate substrate.

It belongs to the arginase family. Homotrimer. Mn(2+) is required as a cofactor.

It catalyses the reaction L-arginine + H2O = urea + L-ornithine. It participates in nitrogen metabolism; urea cycle; L-ornithine and urea from L-arginine: step 1/1. The chain is Arginase, hepatic from Aquarana catesbeiana (American bullfrog).